Consider the following 476-residue polypeptide: Inactive glucose-1-phosphate adenylyltransferase small subunit 2, chloroplastic (476 aa).

The transit peptide at 1 to 55 (MQISSSSFITKFTNLHMVRSTSDHHQWRHNYNLKQLFIPNLSVSNSQHLPLNQSV) directs the protein to the chloroplast.

This sequence belongs to the bacterial/plant glucose-1-phosphate adenylyltransferase family. Heterotetramer. As to expression, expressed at very low levels in leaves, inflorescences, fruits, and roots.

It is found in the plastid. The protein localises to the chloroplast. The polypeptide is Inactive glucose-1-phosphate adenylyltransferase small subunit 2, chloroplastic (Arabidopsis thaliana (Mouse-ear cress)).